A 178-amino-acid polypeptide reads, in one-letter code: Large ribosomal subunit protein eL20 (178 aa).

The protein belongs to the eukaryotic ribosomal protein eL20 family.

This Oryza sativa subsp. japonica (Rice) protein is Large ribosomal subunit protein eL20 (RPL18A).